We begin with the raw amino-acid sequence, 776 residues long: DNA ligase (776 aa).

NAD(+) is bound by residues 31–35 (DAEYD) and 80–81 (SL). Lysine 114 serves as the catalytic N6-AMP-lysine intermediate. Arginine 135, glutamate 172, lysine 288, and lysine 312 together coordinate NAD(+). Zn(2+) is bound by residues cysteine 406, cysteine 409, cysteine 436, and cysteine 442. The BRCT domain maps to 693 to 776 (AEGLPLAGQT…TFLAEQGIVV (84 aa)).

The protein belongs to the NAD-dependent DNA ligase family. LigA subfamily. Requires Mg(2+) as cofactor. Mn(2+) is required as a cofactor.

It carries out the reaction NAD(+) + (deoxyribonucleotide)n-3'-hydroxyl + 5'-phospho-(deoxyribonucleotide)m = (deoxyribonucleotide)n+m + AMP + beta-nicotinamide D-nucleotide.. DNA ligase that catalyzes the formation of phosphodiester linkages between 5'-phosphoryl and 3'-hydroxyl groups in double-stranded DNA using NAD as a coenzyme and as the energy source for the reaction. It is essential for DNA replication and repair of damaged DNA. In Pseudomonas putida (strain GB-1), this protein is DNA ligase.